We begin with the raw amino-acid sequence, 578 residues long: Lysine--tRNA ligase (578 aa).

Residues Glu414 and Glu421 each contribute to the Mg(2+) site.

Belongs to the class-II aminoacyl-tRNA synthetase family. As to quaternary structure, homodimer. The cofactor is Mg(2+).

It is found in the cytoplasm. The catalysed reaction is tRNA(Lys) + L-lysine + ATP = L-lysyl-tRNA(Lys) + AMP + diphosphate. The sequence is that of Lysine--tRNA ligase from Porphyromonas gingivalis (strain ATCC 33277 / DSM 20709 / CIP 103683 / JCM 12257 / NCTC 11834 / 2561).